The following is a 202-amino-acid chain: Dephospho-CoA kinase (202 aa).

One can recognise a DPCK domain in the interval 6–202 (KISVTGDPSS…QCFKALKGTI (197 aa)). Residue 14 to 19 (SSGKTE) participates in ATP binding.

Belongs to the CoaE family.

Its subcellular location is the cytoplasm. It carries out the reaction 3'-dephospho-CoA + ATP = ADP + CoA + H(+). The protein operates within cofactor biosynthesis; coenzyme A biosynthesis; CoA from (R)-pantothenate: step 5/5. In terms of biological role, catalyzes the phosphorylation of the 3'-hydroxyl group of dephosphocoenzyme A to form coenzyme A. The protein is Dephospho-CoA kinase of Chlamydia trachomatis serovar D (strain ATCC VR-885 / DSM 19411 / UW-3/Cx).